The sequence spans 318 residues: Probable carboxylesterase 1 (318 aa).

An N-acetylmethionine modification is found at Met1. The Involved in the stabilization of the negatively charged intermediate by the formation of the oxyanion hole motif lies at 79–81 (HGG). Residues Ser163, Asp258, and His290 contribute to the active site.

The protein belongs to the 'GDXG' lipolytic enzyme family. In terms of tissue distribution, expressed in roots, stems, flowers and siliques.

The enzyme catalyses a carboxylic ester + H2O = an alcohol + a carboxylate + H(+). Carboxylesterase acting on esters with varying acyl chain length. The sequence is that of Probable carboxylesterase 1 (CXE1) from Arabidopsis thaliana (Mouse-ear cress).